Consider the following 409-residue polypeptide: Tryptophan synthase beta chain (409 aa).

An N6-(pyridoxal phosphate)lysine modification is found at K104.

It belongs to the TrpB family. In terms of assembly, tetramer of two alpha and two beta chains. Pyridoxal 5'-phosphate serves as cofactor.

It carries out the reaction (1S,2R)-1-C-(indol-3-yl)glycerol 3-phosphate + L-serine = D-glyceraldehyde 3-phosphate + L-tryptophan + H2O. It functions in the pathway amino-acid biosynthesis; L-tryptophan biosynthesis; L-tryptophan from chorismate: step 5/5. Its function is as follows. The beta subunit is responsible for the synthesis of L-tryptophan from indole and L-serine. In Trichodesmium erythraeum (strain IMS101), this protein is Tryptophan synthase beta chain.